Reading from the N-terminus, the 559-residue chain is Glutamine--tRNA ligase (559 aa).

The short motif at 36–46 (PEPNGYLHLGH) is the 'HIGH' region element. Residues 37–39 (EPN) and 43–49 (HLGHAKS) each bind ATP. Residues D69 and Y214 each contribute to the L-glutamine site. Residues T233, 263–264 (RL), and 271–273 (LSK) contribute to the ATP site. A 'KMSKS' region motif is present at residues 270–274 (LLSKR).

This sequence belongs to the class-I aminoacyl-tRNA synthetase family. Monomer.

The protein resides in the cytoplasm. The enzyme catalyses tRNA(Gln) + L-glutamine + ATP = L-glutaminyl-tRNA(Gln) + AMP + diphosphate. The protein is Glutamine--tRNA ligase of Nitrobacter winogradskyi (strain ATCC 25391 / DSM 10237 / CIP 104748 / NCIMB 11846 / Nb-255).